A 490-amino-acid chain; its full sequence is Ribulose bisphosphate carboxylase large chain (490 aa).

Residues Asn-127 and Thr-177 each coordinate substrate. The active-site Proton acceptor is the Lys-179. Substrate is bound at residue Lys-181. Mg(2+) is bound by residues Lys-205, Asp-207, and Glu-208. Lys-205 bears the N6-carboxylysine mark. Residue His-297 is the Proton acceptor of the active site. 3 residues coordinate substrate: Arg-298, His-330, and Ser-382.

This sequence belongs to the RuBisCO large chain family. Type I subfamily. In terms of assembly, heterohexadecamer of 8 large chains and 8 small chains. Requires Mg(2+) as cofactor.

Its subcellular location is the plastid. It localises to the chloroplast. It carries out the reaction 2 (2R)-3-phosphoglycerate + 2 H(+) = D-ribulose 1,5-bisphosphate + CO2 + H2O. It catalyses the reaction D-ribulose 1,5-bisphosphate + O2 = 2-phosphoglycolate + (2R)-3-phosphoglycerate + 2 H(+). RuBisCO catalyzes two reactions: the carboxylation of D-ribulose 1,5-bisphosphate, the primary event in carbon dioxide fixation, as well as the oxidative fragmentation of the pentose substrate in the photorespiration process. Both reactions occur simultaneously and in competition at the same active site. The protein is Ribulose bisphosphate carboxylase large chain of Phaeodactylum tricornutum (strain CCAP 1055/1).